We begin with the raw amino-acid sequence, 686 residues long: Rhophilin-2 (686 aa).

The 75-residue stretch at 26 to 100 (NPLAQTGRSK…LEGLNISVGV (75 aa)) folds into the REM-1 domain. Residues 46–66 (QILKAVRMRTGAENLLKVATN) form an interaction with Rho region. A BRO1 domain is found at 111 to 460 (PLIPLGLKET…RLTYAQHQEE (350 aa)). One can recognise a PDZ domain in the interval 515–593 (RSIRFTAEEG…DEIEMKVVSL (79 aa)). A Phosphothreonine modification is found at Thr655.

Belongs to the RHPN family. Interacts with GTP-bound RhoA and RhoB. Interacts with both GTP- and GDP-bound RhoA. According to PubMed:12473120, it does not interact with RhoA. Interacts with KRT18. In terms of tissue distribution, widely expressed. Highly expressed in prostate, trachea, stomach, colon, thyroid and pancreas. Expressed at lower level in brain, spinal cord, kidney, placenta and liver.

It localises to the cytoplasm. The protein resides in the perinuclear region. Functionally, binds specifically to GTP-Rho. May function in a Rho pathway to limit stress fiber formation and/or increase the turnover of F-actin structures in the absence of high levels of RhoA activity. This is Rhophilin-2 (RHPN2) from Homo sapiens (Human).